Consider the following 353-residue polypeptide: Photosystem II D2 protein (353 aa).

At T2 the chain carries N-acetylthreonine. T2 carries the post-translational modification Phosphothreonine. A helical membrane pass occupies residues 41-61; that stretch reads CAYFAVGGWFTGTTFVTSWYT. H118 contacts chlorophyll a. A helical transmembrane segment spans residues 125-141; sequence GFMLRQFELARSVQLRP. Pheophytin a-binding residues include Q130 and N143. The chain crosses the membrane as a helical span at residues 153–166; it reads VFVSVFLIYPLGQS. Position 198 (H198) interacts with chlorophyll a. Residues 208 to 228 traverse the membrane as a helical segment; that stretch reads AALLCAIHGATVENTLFEDGD. Positions 215 and 262 each coordinate a plastoquinone. H215 is a Fe cation binding site. Residue H269 participates in Fe cation binding. A helical transmembrane segment spans residues 279–295; it reads GLWMSALGVVGLALNLR.

This sequence belongs to the reaction center PufL/M/PsbA/D family. PSII is composed of 1 copy each of membrane proteins PsbA, PsbB, PsbC, PsbD, PsbE, PsbF, PsbH, PsbI, PsbJ, PsbK, PsbL, PsbM, PsbT, PsbX, PsbY, PsbZ, Psb30/Ycf12, at least 3 peripheral proteins of the oxygen-evolving complex and a large number of cofactors. It forms dimeric complexes. It depends on The D1/D2 heterodimer binds P680, chlorophylls that are the primary electron donor of PSII, and subsequent electron acceptors. It shares a non-heme iron and each subunit binds pheophytin, quinone, additional chlorophylls, carotenoids and lipids. There is also a Cl(-1) ion associated with D1 and D2, which is required for oxygen evolution. The PSII complex binds additional chlorophylls, carotenoids and specific lipids. as a cofactor.

It is found in the plastid. The protein localises to the chloroplast thylakoid membrane. The enzyme catalyses 2 a plastoquinone + 4 hnu + 2 H2O = 2 a plastoquinol + O2. Functionally, photosystem II (PSII) is a light-driven water:plastoquinone oxidoreductase that uses light energy to abstract electrons from H(2)O, generating O(2) and a proton gradient subsequently used for ATP formation. It consists of a core antenna complex that captures photons, and an electron transfer chain that converts photonic excitation into a charge separation. The D1/D2 (PsbA/PsbD) reaction center heterodimer binds P680, the primary electron donor of PSII as well as several subsequent electron acceptors. D2 is needed for assembly of a stable PSII complex. This is Photosystem II D2 protein from Guizotia abyssinica (Niger).